The following is a 221-amino-acid chain: ATP-dependent Clp protease proteolytic subunit 3 (221 aa).

Ser-118 functions as the Nucleophile in the catalytic mechanism. His-143 is an active-site residue.

This sequence belongs to the peptidase S14 family. As to quaternary structure, fourteen ClpP subunits assemble into 2 heptameric rings which stack back to back to give a disk-like structure with a central cavity, resembling the structure of eukaryotic proteasomes.

The protein resides in the cytoplasm. The catalysed reaction is Hydrolysis of proteins to small peptides in the presence of ATP and magnesium. alpha-casein is the usual test substrate. In the absence of ATP, only oligopeptides shorter than five residues are hydrolyzed (such as succinyl-Leu-Tyr-|-NHMec, and Leu-Tyr-Leu-|-Tyr-Trp, in which cleavage of the -Tyr-|-Leu- and -Tyr-|-Trp bonds also occurs).. Cleaves peptides in various proteins in a process that requires ATP hydrolysis. Has a chymotrypsin-like activity. Plays a major role in the degradation of misfolded proteins. The polypeptide is ATP-dependent Clp protease proteolytic subunit 3 (Nocardia farcinica (strain IFM 10152)).